A 456-amino-acid polypeptide reads, in one-letter code: Histidine--tRNA ligase (456 aa).

This sequence belongs to the class-II aminoacyl-tRNA synthetase family. Homodimer.

The protein localises to the cytoplasm. The catalysed reaction is tRNA(His) + L-histidine + ATP = L-histidyl-tRNA(His) + AMP + diphosphate + H(+). The polypeptide is Histidine--tRNA ligase (hisS) (Borreliella burgdorferi (strain ATCC 35210 / DSM 4680 / CIP 102532 / B31) (Borrelia burgdorferi)).